The following is a 229-amino-acid chain: Large ribosomal subunit protein uL1 (229 aa).

It belongs to the universal ribosomal protein uL1 family. As to quaternary structure, part of the 50S ribosomal subunit.

Its function is as follows. Binds directly to 23S rRNA. The L1 stalk is quite mobile in the ribosome, and is involved in E site tRNA release. Protein L1 is also a translational repressor protein, it controls the translation of the L11 operon by binding to its mRNA. This Clostridium beijerinckii (strain ATCC 51743 / NCIMB 8052) (Clostridium acetobutylicum) protein is Large ribosomal subunit protein uL1.